A 275-amino-acid chain; its full sequence is Lectin (275 aa).

The signal sequence occupies residues 1–30 (MASLQTQMISFYLIFLSILLTTIFFFKVNS). D-glucose is bound by residues Asp111 and Gly129. Mn(2+) is bound by residues Glu149 and Asp151. 4 residues coordinate Ca(2+): Asp151, Phe153, Asn155, and Asp159. 2 residues coordinate Mn(2+): Asp159 and His166. A propeptide spanning residues 211 to 217 (NSLEEEN) is cleaved from the precursor. Residues Gly246 and Ala247 each contribute to the D-glucose site. The propeptide occupies 270–275 (KQAADA).

The protein belongs to the leguminous lectin family. In terms of assembly, heterotetramer of two alpha and two beta chains. The mature form consists of two chains, alpha and beta, produced by cleavage of the immature protein. These remain cleaved, yet fold together to form one subunit.

Functionally, D-mannose specific lectin. This is Lectin from Lens culinaris (Lentil).